Reading from the N-terminus, the 134-residue chain is Cytochrome b5 (134 aa).

Residues 6–82 (VKYFTRAEVA…MKQYKVGELV (77 aa)) form the Cytochrome b5 heme-binding domain. Heme-binding residues include His41 and His65. The chain crosses the membrane as a helical span at residues 111–131 (WLMPFVLGLVATLIYKFFFGT).

It belongs to the cytochrome b5 family.

It is found in the endoplasmic reticulum membrane. The protein resides in the microsome membrane. Cytochrome b5 is a membrane bound hemoprotein which function as an electron carrier for several membrane bound oxygenases. The chain is Cytochrome b5 (Cyt-b5) from Musca domestica (House fly).